We begin with the raw amino-acid sequence, 275 residues long: 4-hydroxy-tetrahydrodipicolinate reductase (275 aa).

Residues 13-18 and 108-110 contribute to the NAD(+) site; these read GAAGKM and GTT. Catalysis depends on histidine 164, which acts as the Proton donor/acceptor. Histidine 165 serves as a coordination point for (S)-2,3,4,5-tetrahydrodipicolinate. Catalysis depends on lysine 168, which acts as the Proton donor. A (S)-2,3,4,5-tetrahydrodipicolinate-binding site is contributed by 174–175; the sequence is GT.

This sequence belongs to the DapB family.

It is found in the cytoplasm. It catalyses the reaction (S)-2,3,4,5-tetrahydrodipicolinate + NAD(+) + H2O = (2S,4S)-4-hydroxy-2,3,4,5-tetrahydrodipicolinate + NADH + H(+). It carries out the reaction (S)-2,3,4,5-tetrahydrodipicolinate + NADP(+) + H2O = (2S,4S)-4-hydroxy-2,3,4,5-tetrahydrodipicolinate + NADPH + H(+). Its pathway is amino-acid biosynthesis; L-lysine biosynthesis via DAP pathway; (S)-tetrahydrodipicolinate from L-aspartate: step 4/4. Its function is as follows. Catalyzes the conversion of 4-hydroxy-tetrahydrodipicolinate (HTPA) to tetrahydrodipicolinate. The sequence is that of 4-hydroxy-tetrahydrodipicolinate reductase from Rippkaea orientalis (strain PCC 8801 / RF-1) (Cyanothece sp. (strain PCC 8801)).